A 98-amino-acid polypeptide reads, in one-letter code: Pore-forming peptide amoebapore A (98 aa).

A signal peptide spans 1-21 (MKAIVFVLIFAVAFAVTATHQ). The Saposin B-type domain maps to 22-98 (GEILCNLCTG…NAICAKIHAC (77 aa)). Disulfide bonds link C26–C98, C29–C92, and C56–C67.

Monomer (at pH below 4 and pH above 6). Homodimer (at pH 4-6). Hexamer; formed during insertion in the membrane.

Its subcellular location is the cytoplasmic granule. In terms of biological role, forms pores in the cell membrane of host cells. Has antibacterial activity against M.luteus, no activity against E.coli. Implicated in the cytolytic activity of the parasite. The polypeptide is Pore-forming peptide amoebapore A (Entamoeba histolytica (strain ATCC 30459 / HM-1:IMSS / ABRM)).